Reading from the N-terminus, the 208-residue chain is AN1-type zinc finger protein 6 (208 aa).

The segment at 8–42 (SQVPMLCSTGCGFYGNPRTNGMCSVCYKEHLQRQN) adopts an A20-type zinc-finger fold. C14, C18, C30, and C33 together coordinate Zn(2+). The segment covering 41 to 68 (QNSSNGRISPPATSVSSLSESLPVQCTD) has biased composition (polar residues). The interval 41-140 (QNSSNGRISP…PSEEQSKSLE (100 aa)) is disordered. The residue at position 49 (S49) is a Phosphoserine. Positions 80-94 (STSSSMQPSPVSNQS) are enriched in low complexity. Polar residues-rich tracts occupy residues 95–110 (LLSE…STSV) and 120–133 (VQAS…QPSE). The segment at 143–189 (KQKKNRCFMCRKKVGLTGFECRCGNVYCGVHRYSDVHNCSYNYKADA) adopts an AN1-type zinc-finger fold. Residues C149, C152, C163, C165, C170, H173, H179, and C181 each contribute to the Zn(2+) site. At K204 the chain carries N6-acetyllysine.

Interacts with PKN1. Interacts with TRAF2. Interacts with mono- and polyubiquitin. Interacts with PEX6. Interacts with PEX5 (Cys-linked ubiquitinated). As to expression, widely expressed with high level in heart, skeletal muscle, liver, kidney and placenta.

The protein localises to the cytoplasm. Functionally, involved in regulation of TNF-alpha induced NF-kappa-B activation and apoptosis. Involved in modulation of 'Lys-48'-linked polyubiquitination status of TRAF2 and decreases association of TRAF2 with RIPK1. Required for PTS1 target sequence-dependent protein import into peroxisomes and PEX5 stability; may cooperate with PEX6. In vitro involved in PEX5 export from the cytosol to peroxisomes. This chain is AN1-type zinc finger protein 6 (ZFAND6), found in Homo sapiens (Human).